We begin with the raw amino-acid sequence, 169 residues long: Disulfide bond formation protein B (169 aa).

At 1-14 (MSNDTFYLKREKRF) the chain is on the cytoplasmic side. The helical transmembrane segment at 15-31 (LVLLGIICLSLIGGALY) threads the bilayer. The Periplasmic segment spans residues 32 to 49 (MQIALGEAPCPLCILQRY). Cys41 and Cys44 are oxidised to a cystine. Residues 50-64 (ALLFIAIFAFIGAAM) traverse the membrane as a helical segment. Residues 65–71 (NGRRGVT) are Cytoplasmic-facing. A helical transmembrane segment spans residues 72-89 (VFEALVTLSALCGIAAAG). Residues 90 to 144 (RHAWILAHPSDSCGIDILQPIVDGLPLATLFPTGFQVSGFCTTPYPPVLGLSLAQ) lie on the Periplasmic side of the membrane. The cysteines at positions 102 and 130 are disulfide-linked. The chain crosses the membrane as a helical span at residues 145–163 (WALTAFVLTAILVPACIIR). Residues 164-169 (NRRKPY) are Cytoplasmic-facing.

Belongs to the DsbB family.

It localises to the cell inner membrane. Functionally, required for disulfide bond formation in some periplasmic proteins. Acts by oxidizing the DsbA protein. The sequence is that of Disulfide bond formation protein B from Pseudomonas syringae pv. tomato (strain ATCC BAA-871 / DC3000).